The following is a 242-amino-acid chain: Probable pectate lyase D (242 aa).

The N-terminal stretch at 1–17 (MYQKSLLFSLLASSALA) is a signal peptide. Asparagine 216 carries an N-linked (GlcNAc...) asparagine glycan. Residues 217 to 242 (DTGAEPEEISEGPSDACQYSEPLSSC) form a disordered region.

Belongs to the polysaccharide lyase 3 family. The cofactor is Ca(2+).

The protein resides in the secreted. The enzyme catalyses Eliminative cleavage of (1-&gt;4)-alpha-D-galacturonan to give oligosaccharides with 4-deoxy-alpha-D-galact-4-enuronosyl groups at their non-reducing ends.. In terms of biological role, pectinolytic enzyme consist of four classes of enzymes: pectin lyase, polygalacturonase, pectin methylesterase and rhamnogalacturonase. Among pectinolytic enzymes, pectin lyase is the most important in depolymerization of pectin, since it cleaves internal glycosidic bonds of highly methylated pectins. Favors pectate, the anion, over pectin, the methyl ester. The polypeptide is Probable pectate lyase D (plyD) (Aspergillus fumigatus (strain CBS 144.89 / FGSC A1163 / CEA10) (Neosartorya fumigata)).